A 1372-amino-acid polypeptide reads, in one-letter code: Polysaccharide lyase 8 family protein HylA (1372 aa).

The first 25 residues, 1-25 (MIKKIIVVVAFMLTGFSLTAMSASA), serve as a signal peptide directing secretion. Residues 63 to 172 (DGDETTRWSA…SIISFEAYEK (110 aa)) form the F5/8 type C domain. Positions 183–242 (TENLTISEKRKQQLAFEVSPAGVDITEDQIEWSSSDPTIVTVDQTGNLTAVKSGEAKVTV) constitute a BIG2 domain. Residues His-487, Tyr-496, and Arg-550 contribute to the active site. FIVAR domains lie at 1014 to 1075 (KEAL…VKQL), 1084 to 1146 (DKTN…VKQL), 1155 to 1217 (DKTN…VKQL), and 1226 to 1288 (DKTN…VKRL). The tract at residues 1288-1336 (LTLKNSGENKKEQKNGGNNGHLNTSTGVDQTGTKQVKPSSQGGFRKASQ) is disordered. A compositionally biased stretch (polar residues) spans 1308-1329 (HLNTSTGVDQTGTKQVKPSSQG). Residues 1338-1342 (LPSTG) carry the LPXTG sorting signal motif. Thr-1341 is modified (pentaglycyl murein peptidoglycan amidated threonine). The propeptide at 1342 to 1372 (GEKKSIALVIIGLLVIASGCLLVFRKSKSKK) is removed by sortase.

This sequence belongs to the polysaccharide lyase 8 family.

It is found in the secreted. Its subcellular location is the cell wall. Its function is as follows. Has a very modest degradation activity against heparin sodium salt (HS) in vitro. Involved in the pathogenesis of vancomycin-resistant E.faecalis infections. The protein is Polysaccharide lyase 8 family protein HylA of Enterococcus faecalis (strain ATCC 700802 / V583).